The chain runs to 261 residues: [LysW]-aminoadipate/[LysW]-glutamate kinase (261 aa).

Substrate-binding positions include 35–36, R62, and N166; that span reads GG.

This sequence belongs to the acetylglutamate kinase family. LysZ subfamily.

The protein resides in the cytoplasm. It carries out the reaction [amino-group carrier protein]-C-terminal-N-(1,4-dicarboxybutan-1-yl)-L-glutamine + ATP = [amino-group carrier protein]-C-terminal-N-(1-carboxy-5-phosphooxy-5-oxopentan-1-yl)-L-glutamine + ADP. The catalysed reaction is [amino-group carrier protein]-C-terminal-gamma-(L-glutamyl)-L-glutamate + ATP = [amino-group carrier protein]-C-terminal-gamma-(5-phospho-L-glutamyl)-L-glutamate + ADP. Its pathway is amino-acid biosynthesis; L-lysine biosynthesis via AAA pathway; L-lysine from L-alpha-aminoadipate (Thermus route): step 2/5. It functions in the pathway amino-acid biosynthesis; L-arginine biosynthesis. Functionally, involved in both the arginine and lysine biosynthetic pathways. Phosphorylates the LysW-bound precursors glutamate (for arginine biosynthesis), respectively alpha-aminoadipate (for lysine biosynthesis). In Sulfolobus acidocaldarius (strain ATCC 33909 / DSM 639 / JCM 8929 / NBRC 15157 / NCIMB 11770), this protein is [LysW]-aminoadipate/[LysW]-glutamate kinase.